Here is a 602-residue protein sequence, read N- to C-terminus: ATP-dependent zinc metalloprotease FtsH 3 (602 aa).

Over 1 to 18 the chain is Cytoplasmic; sequence MNSWFLQVSKRLGPAGRR. The helical transmembrane segment at 19 to 39 threads the bilayer; that stretch reads LWLLGFMGVVLAVTLGLALRA. At 40–117 the chain is on the periplasmic side; sequence ARESATQRTA…DFASREDPSR (78 aa). A helical membrane pass occupies residues 118–138; it reads AASAVLPVVVLAAVGFALFTV. Residues 139–602 lie on the Cytoplasmic side of the membrane; that stretch reads SRRRSPKVFS…RRPRPEDQAA (464 aa). Residue 202–209 participates in ATP binding; that stretch reads GEPGTGKT. His-425 is a Zn(2+) binding site. Glu-426 is a catalytic residue. Zn(2+)-binding residues include His-429 and Asp-501.

It in the central section; belongs to the AAA ATPase family. The protein in the C-terminal section; belongs to the peptidase M41 family. As to quaternary structure, homohexamer. The cofactor is Zn(2+).

Its subcellular location is the cell inner membrane. In terms of biological role, acts as a processive, ATP-dependent zinc metallopeptidase for both cytoplasmic and membrane proteins. Plays a role in the quality control of integral membrane proteins. This chain is ATP-dependent zinc metalloprotease FtsH 3, found in Sorangium cellulosum (strain So ce56) (Polyangium cellulosum (strain So ce56)).